A 515-amino-acid polypeptide reads, in one-letter code: Maturase K (515 aa).

This sequence belongs to the intron maturase 2 family. MatK subfamily.

It localises to the plastid. Its subcellular location is the chloroplast. Usually encoded in the trnK tRNA gene intron. Probably assists in splicing its own and other chloroplast group II introns. This chain is Maturase K, found in Cedrus deodara (Deodar cedar).